A 93-amino-acid chain; its full sequence is C-C motif chemokine 14 (93 aa).

Positions 1–19 (MKISVAAIPFFLLITIALG) are cleaved as a signal peptide. Residue Ser26 is glycosylated (O-linked (GalNAc...) serine; partial). Disulfide bonds link Cys35–Cys59 and Cys36–Cys75.

Belongs to the intercrine beta (chemokine CC) family. In terms of processing, the N-terminal processed forms HCC-1(3-74), HCC-1(4-74) and HCC-1(9-74) are produced in small amounts by proteolytic cleavage after secretion in blood. Post-translationally, HCC-1(1-74), but not HCC-1(3-74) and HCC-1(4-74), is partially O-glycosylated; the O-linked glycan consists of one Gal-GalNAc disaccharide, further modified by two N-acetylneuraminic acids. In terms of tissue distribution, expressed constitutively in several normal tissues: spleen, liver, skeletal and heart muscle, gut, and bone marrow, present at high concentrations (1-80 nM) in plasma.

It is found in the secreted. Functionally, has weak activities on human monocytes and acts via receptors that also recognize MIP-1 alpha. It induces intracellular Ca(2+) changes and enzyme release, but no chemotaxis, at concentrations of 100-1,000 nM, and is inactive on T-lymphocytes, neutrophils, and eosinophil leukocytes. Enhances the proliferation of CD34 myeloid progenitor cells. The processed form HCC-1(9-74) is a chemotactic factor that attracts monocytes, eosinophils, and T-cells and is a ligand for CCR1, CCR3 and CCR5. This chain is C-C motif chemokine 14 (CCL14), found in Homo sapiens (Human).